The following is a 279-amino-acid chain: Dehydrogenase/reductase SDR family member 4 (279 aa).

37-61 (LVTASTDGIGFAIARRLAQDGAHVV) is an NADP(+) binding site. An N6-acetyllysine; alternate modification is found at lysine 93. N6-succinyllysine; alternate is present on lysine 93. Lysine 106 is subject to N6-acetyllysine. Substrate is bound at residue serine 170. Catalysis depends on tyrosine 183, which acts as the Proton acceptor. NADP(+) is bound at residue lysine 187. The residue at position 221 (serine 221) is a Phosphoserine. Lysine 235 carries the N6-succinyllysine modification. The Peroxisomal targeting signal motif lies at 277 to 279 (SHL).

This sequence belongs to the short-chain dehydrogenases/reductases (SDR) family. Homotetramer.

It localises to the peroxisome. It carries out the reaction a secondary alcohol + NADP(+) = a ketone + NADPH + H(+). The enzyme catalyses 3alpha-hydroxy-5beta-pregnan-20-one + NADP(+) = 5beta-pregnan-3,20-dione + NADPH + H(+). The catalysed reaction is 5beta-dihydrotestosterone + NADPH + H(+) = 5beta-androstane-3alpha,17beta-diol + NADP(+). It catalyses the reaction all-trans-retinol + NADP(+) = all-trans-retinal + NADPH + H(+). It carries out the reaction isatin + NADPH + H(+) = 3-hydroxyindolin-2-one + NADP(+). Functionally, NADPH-dependent oxidoreductase which catalyzes the reduction of a variety of compounds bearing carbonyl groups including ketosteroids, alpha-dicarbonyl compounds, aldehydes, aromatic ketones and quinones. Reduces all-trans-retinal and 9-cis retinal. Reduces 3-ketosteroids and benzil into 3alpha-hydroxysteroids and S-benzoin, respectively, in contrast to the stereoselectivity of primates DHRS4s which produce 3beta-hydroxysteroids and R-benzoin. In the reverse reaction, catalyzes the NADP-dependent oxidation of 3alpha-hydroxysteroids and alcohol, but with much lower efficiency. Involved in the metabolism of 3alpha-hydroxysteroids, retinoid, isatin and xenobiotic carbonyl compounds. This chain is Dehydrogenase/reductase SDR family member 4 (DHRS4), found in Bos taurus (Bovine).